Here is a 581-residue protein sequence, read N- to C-terminus: 2-hydroxyacyl-CoA lyase 1 (581 aa).

Residues S4 and S6 each carry the phosphoserine modification. A thiamine diphosphate-binding site is contributed by E63. Residues K354, K361, and K368 each carry the N6-succinyllysine modification. Residues 404–487 (TMDIGRTMLQ…IILLVVNNNG (84 aa)) are thiamine pyrophosphate binding. The Mg(2+) site is built by D458 and N485. The short motif at 579–581 (SNM) is the Microbody targeting signal element.

It belongs to the TPP enzyme family. As to quaternary structure, homotetramer. Requires Mg(2+) as cofactor. Thiamine diphosphate is required as a cofactor. As to expression, predominanly expressed in liver.

It localises to the peroxisome. The catalysed reaction is a 2-hydroxy-3-methyl fatty acyl-CoA = a 2-methyl-branched fatty aldehyde + formyl-CoA. It catalyses the reaction an (R)-2-hydroxy-long-chain-fatty acyl-CoA = a long-chain fatty aldehyde + formyl-CoA. The enzyme catalyses 2-hydroxy-3-methylhexadecanoyl-CoA = 2-methylpentadecanal + formyl-CoA. It carries out the reaction 2-hydroxyoctadecanoyl-CoA = heptadecanal + formyl-CoA. The catalysed reaction is 2-hydroxyphytanoyl-CoA = 2,6,10,14-tetramethylpentadecanal + formyl-CoA. It participates in lipid metabolism; fatty acid metabolism. Functionally, peroxisomal 2-OH acyl-CoA lyase involved in the cleavage (C1 removal) reaction in the fatty acid alpha-oxydation in a thiamine pyrophosphate (TPP)-dependent manner. Involved in the degradation of 3-methyl-branched fatty acids like phytanic acid and the shortening of 2-hydroxy long-chain fatty acids. Plays a significant role in the biosynthesis of heptadecanal in the liver. This Mus musculus (Mouse) protein is 2-hydroxyacyl-CoA lyase 1 (Hacl1).